A 145-amino-acid polypeptide reads, in one-letter code: Cystin-1 (145 aa).

Positions 1-129 are disordered; it reads MGSGSSRSGR…PEGQSAISYD (129 aa). Residue Gly2 is the site of N-myristoyl glycine attachment. The short motif at 29-33 is the Ciliary targeting motif element; that stretch reads ASEGG. At Ser116 the chain carries Phosphoserine.

As to quaternary structure, interacts (when myristoylated) with UNC119 and UNC119B; interaction is required for localization to cilium. In terms of tissue distribution, expressed primarily in the kidney and liver. Expressed at lower levels in the lung, brain and heart.

It is found in the cell projection. The protein resides in the cilium membrane. The protein localises to the cytoplasm. Its subcellular location is the cytoskeleton. It localises to the cilium axoneme. In Mus musculus (Mouse), this protein is Cystin-1 (Cys1).